Consider the following 1435-residue polypeptide: Nitric oxide synthase 1 (1435 aa).

The segment at 1–206 (MEEHVFGVQQ…LQGSGDKNEL (206 aa)) is interaction with NOSIP. The region spanning 17 to 99 (SVRLFKRKVG…ETHVVLILRG (83 aa)) is the PDZ domain. Disordered stretches follow at residues 110–201 (TFTG…QGSG) and 277–304 (NNPY…SKCP). Positions 164–246 (QGHGQEAGSP…TGVQVDRDFD (83 aa)) are interaction with DYNLL1/PIN. Positions 290-300 (GKQSPTKNGSP) are enriched in polar residues. Ser-340 is a binding site for (6R)-L-erythro-5,6,7,8-tetrahydrobiopterin. Cys-421 contributes to the heme b binding site. L-arginine is bound by residues Gln-484, Trp-593, Tyr-594, and Glu-598. (6R)-L-erythro-5,6,7,8-tetrahydrobiopterin-binding residues include Val-683, Trp-684, and Phe-697. Tyr-712 is a heme b binding site. Residues 731–751 (KRRAIGFKKLAEAVKFSAKLM) form a calmodulin-binding region. In terms of domain architecture, Flavodoxin-like spans 761 to 941 (ATILYATETG…AFRTWAKKVF (181 aa)). FMN contacts are provided by Thr-767, Glu-768, Thr-769, Lys-771, Ser-772, Ser-813, Thr-814, and Gly-818. A phosphoserine mark is found at Ser-853, Ser-863, and Ser-864. Ser-892, His-897, Cys-899, Glu-925, and Gln-929 together coordinate FMN. The FAD-binding FR-type domain occupies 996 to 1243 (KRVSAARLLS…VRGAPSFRLP (248 aa)). Arg-1016 is a binding site for NADP(+). Residues His-1038, Arg-1179, Tyr-1180, Tyr-1181, Ser-1182, Thr-1197, and Ala-1199 each contribute to the FAD site. Residue Ser-1202 participates in NADP(+) binding. FAD contacts are provided by Tyr-1203, Val-1216, Cys-1217, and Ser-1218. Residues Thr-1257, Arg-1290, Ser-1319, Arg-1320, Lys-1326, Tyr-1328, Gln-1330, Asp-1363, Thr-1404, and Arg-1406 each coordinate NADP(+).

The protein belongs to the NOS family. Homodimer. Interacts with DLG4; the interaction possibly being prevented by the association between NOS1 and CAPON. Forms a ternary complex with CAPON and RASD1. Forms a ternary complex with CAPON and SYN1. Interacts with ZDHHC23. Interacts with NOSIP; which may impair its synaptic location. Interacts with HTR4. Interacts with SLC6A4. Interacts with VAC14. Interacts (via N-terminal domain) with DLG4 (via N-terminal tandem pair of PDZ domains). Interacts with SLC6A4. Forms a complex with ASL, ASS1 and SLC7A1; the complex regulates cell-autonomous L-arginine synthesis and citrulline recycling while channeling extracellular L-arginine to nitric oxide synthesis pathway. Interacts with DMD; localizes NOS1 to sarcolemma in muscle cells. Interacts with DYNLL1; inhibits the nitric oxide synthase activity. Heme b is required as a cofactor. Requires FAD as cofactor. It depends on FMN as a cofactor. (6R)-L-erythro-5,6,7,8-tetrahydrobiopterin serves as cofactor. Post-translationally, ubiquitinated; mediated by STUB1/CHIP in the presence of Hsp70 and Hsp40 (in vitro).

It localises to the cell membrane. The protein localises to the sarcolemma. It is found in the cell projection. Its subcellular location is the dendritic spine. It catalyses the reaction 2 L-arginine + 3 NADPH + 4 O2 + H(+) = 2 L-citrulline + 2 nitric oxide + 3 NADP(+) + 4 H2O. Stimulated by calcium/calmodulin. Inhibited by DYNLL1 that prevents the dimerization of the protein. Inhibited by NOSIP. In terms of biological role, produces nitric oxide (NO) which is a messenger molecule with diverse functions throughout the body. In the brain and peripheral nervous system, NO displays many properties of a neurotransmitter. Probably has nitrosylase activity and mediates cysteine S-nitrosylation of cytoplasmic target proteins such SRR. The chain is Nitric oxide synthase 1 (NOS1) from Oryctolagus cuniculus (Rabbit).